Reading from the N-terminus, the 802-residue chain is Copper-exporting P-type ATPase (802 aa).

HMA domains lie at 5 to 70 (KKTT…YGVA) and 72 to 138 (ETVE…YDAS). Cu(+) contacts are provided by Cys16, Cys19, Cys83, and Cys86. 6 helical membrane passes run 161 to 181 (LIISAVLSLPLLMLMFVHLFN), 192 to 212 (WFQFILATPVQFIIGWQFYVG), 224 to 244 (MDVLVAVGTSAAYFYSIYEMV), 256 to 276 (LYFETSAVLITLILFGKYLEA), 411 to 431 (YFVPIVVGIALLTFIVWITLV), and 438 to 458 (PALVASISVLVIACPCALGLA). Asp495 (4-aspartylphosphate intermediate) is an active-site residue. Mg(2+) contacts are provided by Asp690 and Asp694. Helical transmembrane passes span 748–767 (LFWAFGYNIAGIPIAALGLL) and 771–790 (VAGAAMALSSVSVVTNALRL).

Belongs to the cation transport ATPase (P-type) (TC 3.A.3) family. Type IB subfamily.

The protein localises to the cell membrane. It carries out the reaction Cu(+)(in) + ATP + H2O = Cu(+)(out) + ADP + phosphate + H(+). In terms of biological role, involved in copper export. In Staphylococcus aureus (strain MW2), this protein is Copper-exporting P-type ATPase (copA).